The chain runs to 165 residues: NADPH-dependent 7-cyano-7-deazaguanine reductase (165 aa).

The active-site Thioimide intermediate is C56. The Proton donor role is filled by D63. Substrate contacts are provided by residues 78-80 (VES) and 97-98 (HE).

The protein belongs to the GTP cyclohydrolase I family. QueF type 1 subfamily.

Its subcellular location is the cytoplasm. It catalyses the reaction 7-aminomethyl-7-carbaguanine + 2 NADP(+) = 7-cyano-7-deazaguanine + 2 NADPH + 3 H(+). It functions in the pathway tRNA modification; tRNA-queuosine biosynthesis. Functionally, catalyzes the NADPH-dependent reduction of 7-cyano-7-deazaguanine (preQ0) to 7-aminomethyl-7-deazaguanine (preQ1). The chain is NADPH-dependent 7-cyano-7-deazaguanine reductase from Bacillus mycoides (strain KBAB4) (Bacillus weihenstephanensis).